The primary structure comprises 418 residues: cAMP-dependent protein kinase type II-beta regulatory subunit (418 aa).

The interval 2–153 (SIEIPAGLTE…RLQEACKDIL (152 aa)) is dimerization and phosphorylation. Residues 48 to 57 (TARFGHEGRT) are compositionally biased toward basic and acidic residues. The tract at residues 48–96 (TARFGHEGRTWGDLGAAAGGGTPSKGVNFAEEPMQSDSEDGEEEEAAPA) is disordered. The residue at position 69 (threonine 69) is a Phosphothreonine. Phosphoserine occurs at positions 83, 85, and 114. The span at 84 to 94 (DSEDGEEEEAA) shows a compositional bias: acidic residues. Residues 154–275 (LFKN…ESLP), glutamate 223, arginine 232, 276–418 (FLKS…EPTA), glutamate 352, and arginine 361 contribute to the 3',5'-cyclic AMP site.

The protein belongs to the cAMP-dependent kinase regulatory chain family. As to quaternary structure, the inactive form of the enzyme is composed of two regulatory chains and two catalytic chains. Activation by cAMP produces two active catalytic monomers and a regulatory dimer that binds four cAMP molecules. Interacts with PRKACA and PRKACB. Interacts with the phosphorylated form of PJA2. Forms a complex composed of PRKAR2B, GSK3B and GSKIP through GSKIP interaction; facilitates PKA-induced phosphorylation and regulates GSK3B activity. In terms of processing, phosphorylated by the activated catalytic chain. As to expression, four types of regulatory chains are found: I-alpha, I-beta, II-alpha, and II-beta. Their expression varies among tissues and is in some cases constitutive and in others inducible.

The protein localises to the cytoplasm. Its subcellular location is the cell membrane. Its function is as follows. Regulatory subunit of the cAMP-dependent protein kinases involved in cAMP signaling in cells. Type II regulatory chains mediate membrane association by binding to anchoring proteins, including the MAP2 kinase. The sequence is that of cAMP-dependent protein kinase type II-beta regulatory subunit (PRKAR2B) from Homo sapiens (Human).